We begin with the raw amino-acid sequence, 85 residues long: U5-theraphotoxin-Hhn1a (85 aa).

The first 21 residues, 1–21 (MKSQIFFAVAALFLLTVRTYA), serve as a signal peptide directing secretion. The propeptide occupies 22-49 (SKSKEQDLRDALFSAMFSADNQLNPQER). Intrachain disulfides connect C51–C65, C58–C70, and C64–C77.

The protein belongs to the neurotoxin 10 (Hwtx-1) family. 18 (Hntx-VII) subfamily. As to expression, expressed by the venom gland.

It localises to the secreted. Functionally, ion channel impairing toxin that inhibits voltage-gated sodium channels. The recombinantly expressed toxin shows a weak activity against Nav1.7/SCN9A, and shifts the voltage dependence of channel activation to more depolarized potentials. The sequence is that of U5-theraphotoxin-Hhn1a from Cyriopagopus hainanus (Chinese bird spider).